The following is a 65-amino-acid chain: Hainantoxin-X (65 aa).

The signal sequence occupies residues 1-20 (MNMKILVLVAVLCLVVSTHA). Residues 21-37 (ERHSKTDMEDSPMIQER) constitute a propeptide that is removed on maturation. 3 disulfide bridges follow: cysteine 39/cysteine 56, cysteine 46/cysteine 59, and cysteine 55/cysteine 64.

Belongs to the neurotoxin 36 family. 02 subfamily. As to expression, expressed by the venom gland.

Its subcellular location is the secreted. In terms of biological role, reversibly blocks N-type calcium channels (Cav2.2/CACNA1B) in rat dorsal root ganglion cells. Elicits no toxic symptoms in either vertebrates or invertebrates during a period of 48 hours post-injection, when it was assayed in vivo by direct injection into mice and cockroaches. The protein is Hainantoxin-X of Cyriopagopus hainanus (Chinese bird spider).